Consider the following 191-residue polypeptide: Somatotropin (191 aa).

His-20 is a binding site for Zn(2+). Cys-53 and Cys-164 form a disulfide bridge. Residue Glu-173 participates in Zn(2+) binding. Cys-181 and Cys-189 form a disulfide bridge.

It belongs to the somatotropin/prolactin family.

The protein resides in the secreted. In terms of biological role, growth hormone plays an important role in growth control and is involved in the regulation of several anabolic processes. Implicated as an osmoregulatory substance important for seawater adaptation. The protein is Somatotropin (GH) of Chelonia mydas (Green sea-turtle).